Here is a 386-residue protein sequence, read N- to C-terminus: Acetylornithine aminotransferase (386 aa).

Pyridoxal 5'-phosphate contacts are provided by residues 94–95 and F121; that span reads GT. Residue R124 coordinates N(2)-acetyl-L-ornithine. 206–209 lines the pyridoxal 5'-phosphate pocket; the sequence is DEVQ. An N6-(pyridoxal phosphate)lysine modification is found at K235. S263 is a N(2)-acetyl-L-ornithine binding site. Residue T264 participates in pyridoxal 5'-phosphate binding.

This sequence belongs to the class-III pyridoxal-phosphate-dependent aminotransferase family. ArgD subfamily. In terms of assembly, homodimer. It depends on pyridoxal 5'-phosphate as a cofactor.

Its subcellular location is the cytoplasm. The enzyme catalyses N(2)-acetyl-L-ornithine + 2-oxoglutarate = N-acetyl-L-glutamate 5-semialdehyde + L-glutamate. The protein operates within amino-acid biosynthesis; L-arginine biosynthesis; N(2)-acetyl-L-ornithine from L-glutamate: step 4/4. The polypeptide is Acetylornithine aminotransferase (Listeria monocytogenes serovar 1/2a (strain ATCC BAA-679 / EGD-e)).